A 197-amino-acid polypeptide reads, in one-letter code: Putative phosphopantothenoylcysteine decarboxylase (197 aa).

FMN-binding positions include Phe-52 and 102 to 105 (SANT). Asn-139 contributes to the substrate binding site. Cys-174 serves as the catalytic Proton donor.

It belongs to the HFCD (homooligomeric flavin containing Cys decarboxylase) superfamily. Homotrimer. FMN is required as a cofactor.

The enzyme catalyses N-[(R)-4-phosphopantothenoyl]-L-cysteine + H(+) = (R)-4'-phosphopantetheine + CO2. It participates in cofactor biosynthesis; coenzyme A biosynthesis; CoA from (R)-pantothenate: step 3/5. Its function is as follows. Necessary for the biosynthesis of coenzyme A. Catalyzes the decarboxylation of 4-phosphopantothenoylcysteine to form 4'-phosphopantotheine. The chain is Putative phosphopantothenoylcysteine decarboxylase (ppcdc) from Dictyostelium discoideum (Social amoeba).